We begin with the raw amino-acid sequence, 331 residues long: Osmotic avoidance abnormal protein 8 (331 aa).

A signal peptide spans 1-21 (MPAKMLKWLLIHIFLIHSIFC).

Expressed in the hypodermal syncitium but not in hypodermal seam cells.

It is found in the secreted. Functionally, negative regulator of the osmotic stress response. Acts via the transmembrane protein ptr-23. In Caenorhabditis elegans, this protein is Osmotic avoidance abnormal protein 8 (osm-8).